We begin with the raw amino-acid sequence, 644 residues long: Chaperone protein DnaK (644 aa).

T199 carries the post-translational modification Phosphothreonine; by autocatalysis. The segment at K605–K644 is disordered. A compositionally biased stretch (polar residues) spans E609 to T623. Residues G629–K644 show a composition bias toward acidic residues.

This sequence belongs to the heat shock protein 70 family.

In terms of biological role, acts as a chaperone. This is Chaperone protein DnaK from Legionella pneumophila subsp. pneumophila (strain Philadelphia 1 / ATCC 33152 / DSM 7513).